The chain runs to 241 residues: Glutamate/aspartate import ATP-binding protein GltL (241 aa).

An ABC transporter domain is found at 2–236 (ITLKNVSKWY…PKSDRAKDFL (235 aa)). 34–41 (GPSGSGKS) serves as a coordination point for ATP.

It belongs to the ABC transporter superfamily. As to quaternary structure, the complex is composed of two ATP-binding proteins (GltL), two transmembrane proteins (GltJ and GltK) and a solute-binding protein (GltI).

It is found in the cell inner membrane. It carries out the reaction a polar amino acid(out) + ATP + H2O = a polar amino acid(in) + ADP + phosphate + H(+). The catalysed reaction is L-glutamate(out) + ATP + H2O = L-glutamate(in) + ADP + phosphate + H(+). The enzyme catalyses L-aspartate(out) + ATP + H2O = L-aspartate(in) + ADP + phosphate + H(+). In terms of biological role, part of the ABC transporter complex GltIJKL involved in glutamate and aspartate uptake. Probably responsible for energy coupling to the transport system. The protein is Glutamate/aspartate import ATP-binding protein GltL (gltL) of Escherichia coli O157:H7.